The primary structure comprises 557 residues: Hydroxylamine reductase (557 aa).

[4Fe-4S] cluster-binding residues include Cys3, Cys6, Cys19, and Cys26. Residues His253, Glu277, Cys321, Cys408, Cys436, Cys461, Glu495, and Lys497 each contribute to the hybrid [4Fe-2O-2S] cluster site. A Cysteine persulfide modification is found at Cys408.

The protein belongs to the HCP family. It depends on [4Fe-4S] cluster as a cofactor. The cofactor is hybrid [4Fe-2O-2S] cluster.

Its subcellular location is the cytoplasm. The enzyme catalyses A + NH4(+) + H2O = hydroxylamine + AH2 + H(+). In terms of biological role, catalyzes the reduction of hydroxylamine to form NH(3) and H(2)O. The protein is Hydroxylamine reductase of Acidiphilium cryptum (strain JF-5).